A 73-amino-acid chain; its full sequence is Mauriporin (73 aa).

An N-terminal signal peptide occupies residues methionine 1–serine 22.

Belongs to the non-disulfide-bridged peptide (NDBP) superfamily. Long chain multifunctional peptide (group 2) family. As to expression, expressed by the venom gland.

The protein localises to the secreted. Its subcellular location is the target cell membrane. In terms of biological role, amphipathic peptide that displays potent antimicrobial activities against a range of Gram-positive and Gram-negative planktonic bacteria with MIC values in the range 5 uM to 10 uM. In more details, it is active on Listeria ivanovii (MIC=5 uM), Staphylococcus epidermidis (MIC=10 uM), Salmonella enterica (MIC=5 uM), Pseudomonas aeruginosa (ATCC 27853) (MIC=5 uM), Acinetobacter baumannii (MIC=5 uM), Klebsiella pneumoniae (MIC=5 uM), Escherichia coli (MIC=7.5 uM), Salmonella typhimurium (MIC=7.5 uM), Pseudomonas aeruginosa (ATCC 9027) (MIC=10 uM). Is also able to prevent P.aeruginosa biofilm formation while showing weak hemolytic activity towards human erythrocytes. Probably induces bacterial cell death through membrane permeabilization. Moreover, shows DNA-binding activities. Also exerts potent selective cytotoxic and antiproliferative activity against three different prostate cancer cell lines (IC(50)=4.4-7.8 uM), compared to non-tumorigenic cell lines (IC(50)=59.7 uM in Vero and 62.5 uM in HUVEC cells). This peptide possibly exerts its cytotoxic activity through a necrotic mode of cell death. Only shows diminished hemolytic activity against sheep erythrocytes. Does not induce cell death through apoptosis and consequently is not acting upon an intracellular target. This Androctonus mauritanicus (Fat-tailed scorpion) protein is Mauriporin.